The following is a 379-amino-acid chain: tRNA 2-selenouridine synthase (379 aa).

Residues 15-138 (FQQNIPLMDV…ARNYLIKQIE (124 aa)) form the Rhodanese domain. Catalysis depends on Cys-98, which acts as the S-selanylcysteine intermediate.

This sequence belongs to the SelU family. As to quaternary structure, monomer.

It carries out the reaction 5-methylaminomethyl-2-thiouridine(34) in tRNA + selenophosphate + (2E)-geranyl diphosphate + H2O + H(+) = 5-methylaminomethyl-2-selenouridine(34) in tRNA + (2E)-thiogeraniol + phosphate + diphosphate. The enzyme catalyses 5-methylaminomethyl-2-thiouridine(34) in tRNA + (2E)-geranyl diphosphate = 5-methylaminomethyl-S-(2E)-geranyl-thiouridine(34) in tRNA + diphosphate. The catalysed reaction is 5-methylaminomethyl-S-(2E)-geranyl-thiouridine(34) in tRNA + selenophosphate + H(+) = 5-methylaminomethyl-2-(Se-phospho)selenouridine(34) in tRNA + (2E)-thiogeraniol. It catalyses the reaction 5-methylaminomethyl-2-(Se-phospho)selenouridine(34) in tRNA + H2O = 5-methylaminomethyl-2-selenouridine(34) in tRNA + phosphate. In terms of biological role, involved in the post-transcriptional modification of the uridine at the wobble position (U34) of tRNA(Lys), tRNA(Glu) and tRNA(Gln). Catalyzes the conversion of 2-thiouridine (S2U-RNA) to 2-selenouridine (Se2U-RNA). Acts in a two-step process involving geranylation of 2-thiouridine (S2U) to S-geranyl-2-thiouridine (geS2U) and subsequent selenation of the latter derivative to 2-selenouridine (Se2U) in the tRNA chain. The chain is tRNA 2-selenouridine synthase from Bdellovibrio bacteriovorus (strain ATCC 15356 / DSM 50701 / NCIMB 9529 / HD100).